The primary structure comprises 261 residues: CD40 ligand (261 aa).

Over 1-22 the chain is Cytoplasmic; that stretch reads MVETYHQPAPRSAATGLPVSMK. The helical; Signal-anchor for type II membrane protein transmembrane segment at 23–43 threads the bilayer; sequence IFMYLLTVFLITQMIGSALFA. Residues 44-261 lie on the Extracellular side of the membrane; it reads VYLHRRLDKI…GFTSFGLLKL (218 aa). Residues 122–261 form the THD domain; the sequence is IAAHVISEAS…GFTSFGLLKL (140 aa). A disulfide bond links Cys-178 and Cys-218. The N-linked (GlcNAc...) asparagine glycan is linked to Asn-240.

The protein belongs to the tumor necrosis factor family. As to quaternary structure, homotrimer. Interacts with CD28. CD40 ligand, soluble form: Exists as either a monomer or a homotrimer. Forms a ternary complex between CD40 and integrins for CD40-CD40LG signaling. In terms of processing, the soluble form derives from the membrane form by proteolytic processing.

Its subcellular location is the cell membrane. It is found in the cell surface. It localises to the secreted. Cytokine that acts as a ligand to CD40/TNFRSF5. Costimulates T-cell proliferation and cytokine production. Its cross-linking on T-cells generates a costimulatory signal which enhances the production of IL4 and IL10 in conjunction with the TCR/CD3 ligation and CD28 costimulation. Induces the activation of NF-kappa-B. Induces the activation of kinases MAPK8 and PAK2 in T-cells. Mediates B-cell proliferation in the absence of co-stimulus as well as IgE production in the presence of IL4. Involved in immunoglobulin class switching. In terms of biological role, acts as a ligand for integrins, specifically ITGA5:ITGB1 and ITGAV:ITGB3; both integrins and the CD40 receptor are required for activation of CD40-CD40LG signaling, which have cell-type dependent effects, such as B-cell activation, NF-kappa-B signaling and anti-apoptotic signaling. The polypeptide is CD40 ligand (CD40LG) (Aotus trivirgatus (Three-striped night monkey)).